Consider the following 384-residue polypeptide: Anhydro-N-acetylmuramic acid kinase (384 aa).

Residue 9 to 16 (GTSADGVD) participates in ATP binding.

The protein belongs to the anhydro-N-acetylmuramic acid kinase family.

The catalysed reaction is 1,6-anhydro-N-acetyl-beta-muramate + ATP + H2O = N-acetyl-D-muramate 6-phosphate + ADP + H(+). Its pathway is amino-sugar metabolism; 1,6-anhydro-N-acetylmuramate degradation. It functions in the pathway cell wall biogenesis; peptidoglycan recycling. Its function is as follows. Catalyzes the specific phosphorylation of 1,6-anhydro-N-acetylmuramic acid (anhMurNAc) with the simultaneous cleavage of the 1,6-anhydro ring, generating MurNAc-6-P. Is required for the utilization of anhMurNAc either imported from the medium or derived from its own cell wall murein, and thus plays a role in cell wall recycling. The protein is Anhydro-N-acetylmuramic acid kinase of Synechococcus sp. (strain CC9311).